Reading from the N-terminus, the 198-residue chain is Cytochrome c oxidase subunit 2 (198 aa).

Residues 1-13 (AICSLVLYLLTLM) traverse the membrane as a helical segment. Residues 14–26 (LMEKLSSNTVDAQ) are Mitochondrial matrix-facing. Residues 27 to 54 (EVELIWTILPAIVLILLALPSLQILYMM) form a helical membrane-spanning segment. Topologically, residues 55-198 (DEIDEPDLTL…WSSLLSTSSL (144 aa)) are mitochondrial intermembrane. Cu cation is bound by residues His-128, Cys-163, Glu-165, Cys-167, His-171, and Met-174. Position 165 (Glu-165) interacts with Mg(2+).

The protein belongs to the cytochrome c oxidase subunit 2 family. In terms of assembly, component of the cytochrome c oxidase (complex IV, CIV), a multisubunit enzyme composed of 14 subunits. The complex is composed of a catalytic core of 3 subunits MT-CO1, MT-CO2 and MT-CO3, encoded in the mitochondrial DNA, and 11 supernumerary subunits COX4I, COX5A, COX5B, COX6A, COX6B, COX6C, COX7A, COX7B, COX7C, COX8 and NDUFA4, which are encoded in the nuclear genome. The complex exists as a monomer or a dimer and forms supercomplexes (SCs) in the inner mitochondrial membrane with NADH-ubiquinone oxidoreductase (complex I, CI) and ubiquinol-cytochrome c oxidoreductase (cytochrome b-c1 complex, complex III, CIII), resulting in different assemblies (supercomplex SCI(1)III(2)IV(1) and megacomplex MCI(2)III(2)IV(2)). Found in a complex with TMEM177, COA6, COX18, COX20, SCO1 and SCO2. Interacts with TMEM177 in a COX20-dependent manner. Interacts with COX20. Interacts with COX16. Cu cation serves as cofactor.

The protein localises to the mitochondrion inner membrane. It catalyses the reaction 4 Fe(II)-[cytochrome c] + O2 + 8 H(+)(in) = 4 Fe(III)-[cytochrome c] + 2 H2O + 4 H(+)(out). Functionally, component of the cytochrome c oxidase, the last enzyme in the mitochondrial electron transport chain which drives oxidative phosphorylation. The respiratory chain contains 3 multisubunit complexes succinate dehydrogenase (complex II, CII), ubiquinol-cytochrome c oxidoreductase (cytochrome b-c1 complex, complex III, CIII) and cytochrome c oxidase (complex IV, CIV), that cooperate to transfer electrons derived from NADH and succinate to molecular oxygen, creating an electrochemical gradient over the inner membrane that drives transmembrane transport and the ATP synthase. Cytochrome c oxidase is the component of the respiratory chain that catalyzes the reduction of oxygen to water. Electrons originating from reduced cytochrome c in the intermembrane space (IMS) are transferred via the dinuclear copper A center (CU(A)) of subunit 2 and heme A of subunit 1 to the active site in subunit 1, a binuclear center (BNC) formed by heme A3 and copper B (CU(B)). The BNC reduces molecular oxygen to 2 water molecules using 4 electrons from cytochrome c in the IMS and 4 protons from the mitochondrial matrix. In Tinamus major (Great tinamou), this protein is Cytochrome c oxidase subunit 2 (MT-CO2).